The primary structure comprises 548 residues: Chaperonin GroEL (548 aa).

Residues 29-32 (TMGP), lysine 50, 86-90 (DGTTT), glycine 414, 478-480 (NAA), and aspartate 494 contribute to the ATP site.

Belongs to the chaperonin (HSP60) family. As to quaternary structure, forms a cylinder of 14 subunits composed of two heptameric rings stacked back-to-back. Interacts with the co-chaperonin GroES.

The protein localises to the cytoplasm. It carries out the reaction ATP + H2O + a folded polypeptide = ADP + phosphate + an unfolded polypeptide.. Together with its co-chaperonin GroES, plays an essential role in assisting protein folding. The GroEL-GroES system forms a nano-cage that allows encapsulation of the non-native substrate proteins and provides a physical environment optimized to promote and accelerate protein folding. This is Chaperonin GroEL from Legionella pneumophila (strain Corby).